Reading from the N-terminus, the 261-residue chain is Ribonuclease HII (261 aa).

Over residues 1–20 (MIRDKSAKRPAKDAPKKAAV) the composition is skewed to basic and acidic residues. Residues 1–23 (MIRDKSAKRPAKDAPKKAAVKEA) are disordered. One can recognise an RNase H type-2 domain in the interval 42–230 (WPVAGCDEAG…VAAARAKHMP (189 aa)). The a divalent metal cation site is built by D48, E49, and D139.

Belongs to the RNase HII family. Requires Mn(2+) as cofactor. The cofactor is Mg(2+).

The protein resides in the cytoplasm. It catalyses the reaction Endonucleolytic cleavage to 5'-phosphomonoester.. Its function is as follows. Endonuclease that specifically degrades the RNA of RNA-DNA hybrids. The protein is Ribonuclease HII of Bradyrhizobium diazoefficiens (strain JCM 10833 / BCRC 13528 / IAM 13628 / NBRC 14792 / USDA 110).